A 359-amino-acid polypeptide reads, in one-letter code: S-adenosylmethionine:tRNA ribosyltransferase-isomerase (359 aa).

The protein belongs to the QueA family. As to quaternary structure, monomer.

The protein resides in the cytoplasm. The catalysed reaction is 7-aminomethyl-7-carbaguanosine(34) in tRNA + S-adenosyl-L-methionine = epoxyqueuosine(34) in tRNA + adenine + L-methionine + 2 H(+). The protein operates within tRNA modification; tRNA-queuosine biosynthesis. Transfers and isomerizes the ribose moiety from AdoMet to the 7-aminomethyl group of 7-deazaguanine (preQ1-tRNA) to give epoxyqueuosine (oQ-tRNA). The protein is S-adenosylmethionine:tRNA ribosyltransferase-isomerase of Alcanivorax borkumensis (strain ATCC 700651 / DSM 11573 / NCIMB 13689 / SK2).